Here is a 284-residue protein sequence, read N- to C-terminus: MSLTDLTSLETIIETAFDNRDGVNVSTKGEVRDAVNTSLQLLDSGKVRVAEKQADGNWKVNQWLKKAVLLSFRLNDMEIVTGGPGESTWWDKVPSKFENWGENQFRAAGFRAVPNAVVRRSAYVAKNVVLMPSFVNLGAYVDEGTMVDTWATVGSCAQIGKNVHLSGGVGIGGVLEPLQAGPTIIEDNCFIGARSEVVEGCIVREGAVLGMGVFIGKSTKIVDRATGEITYGEVPPYSVVVAGTMPGKPFPNGEPGPSLYCAVIVKRVDEKTRSKTGINELLRD.

Arginine 111 and aspartate 148 together coordinate substrate.

Belongs to the transferase hexapeptide repeat family. Homotrimer.

It is found in the cytoplasm. It carries out the reaction (S)-2,3,4,5-tetrahydrodipicolinate + succinyl-CoA + H2O = (S)-2-succinylamino-6-oxoheptanedioate + CoA. The protein operates within amino-acid biosynthesis; L-lysine biosynthesis via DAP pathway; LL-2,6-diaminopimelate from (S)-tetrahydrodipicolinate (succinylase route): step 1/3. This is 2,3,4,5-tetrahydropyridine-2,6-dicarboxylate N-succinyltransferase from Agrobacterium fabrum (strain C58 / ATCC 33970) (Agrobacterium tumefaciens (strain C58)).